The primary structure comprises 519 residues: Putative glucosylceramidase 4 (519 aa).

The first 24 residues, 1-24, serve as a signal peptide directing secretion; the sequence is MILNISVSLLIFLAFYGFSSDAKS. Glu256 serves as the catalytic Proton donor. Glu361 functions as the Nucleophile in the catalytic mechanism.

This sequence belongs to the glycosyl hydrolase 30 family.

It carries out the reaction a beta-D-glucosylceramide + H2O = an N-acyl-sphingoid base + D-glucose. It catalyses the reaction a beta-D-glucosyl-(1&lt;-&gt;1')-N-acylsphing-4-enine + H2O = an N-acylsphing-4-enine + D-glucose. The enzyme catalyses an N-acyl-1-beta-D-glucosyl-15-methylhexadecasphing-4-enine + H2O = an N-acyl-15-methylhexadecasphing-4-enine + D-glucose. Its pathway is lipid metabolism; sphingolipid metabolism. Its function is as follows. Glucosylceramidase that catalyzes the hydrolysis of glucosylceramides into free ceramides and glucose. C.elegans contains specific sphingoid bases, which are unique or different in structure compared to the sphingoid bases found in other animals. Two examples of these distinctive compounds are: 15-methylhexadecasphinganine and 15-methylhexadecasphing-4-enine. In Caenorhabditis elegans, this protein is Putative glucosylceramidase 4 (gba-4).